The following is a 299-amino-acid chain: Release factor glutamine methyltransferase (299 aa).

Residues 134–138 (GTGSG), D157, W186, and N203 each bind S-adenosyl-L-methionine. 203–206 (NPPY) contacts substrate.

This sequence belongs to the protein N5-glutamine methyltransferase family. PrmC subfamily.

It catalyses the reaction L-glutaminyl-[peptide chain release factor] + S-adenosyl-L-methionine = N(5)-methyl-L-glutaminyl-[peptide chain release factor] + S-adenosyl-L-homocysteine + H(+). In terms of biological role, methylates the class 1 translation termination release factors RF1/PrfA and RF2/PrfB on the glutamine residue of the universally conserved GGQ motif. The protein is Release factor glutamine methyltransferase of Synechocystis sp. (strain ATCC 27184 / PCC 6803 / Kazusa).